The primary structure comprises 155 residues: Ribosome maturation factor RimP (155 aa).

The protein belongs to the RimP family.

It localises to the cytoplasm. Required for maturation of 30S ribosomal subunits. This Staphylococcus saprophyticus subsp. saprophyticus (strain ATCC 15305 / DSM 20229 / NCIMB 8711 / NCTC 7292 / S-41) protein is Ribosome maturation factor RimP.